Here is a 296-residue protein sequence, read N- to C-terminus: Uridine phosphorylase A (296 aa).

Residues Gly46, Arg77, and 121-124 (RLGT) each bind phosphate. Uridine contacts are provided by residues 125–126 (SG) and 201–203 (QGR).

It belongs to the PNP/UDP phosphorylase family. As to quaternary structure, homodimer.

The catalysed reaction is uridine + phosphate = alpha-D-ribose 1-phosphate + uracil. The protein operates within pyrimidine metabolism; UMP biosynthesis via salvage pathway; uracil from uridine (phosphorylase route): step 1/1. Functionally, catalyzes the reversible phosphorylytic cleavage of uridine and deoxyuridine to uracil and ribose- or deoxyribose-1-phosphate. The produced molecules are then utilized as carbon and energy sources or in the rescue of pyrimidine bases for nucleotide synthesis. The chain is Uridine phosphorylase A from Schistosoma mansoni (Blood fluke).